The following is a 1382-amino-acid chain: Hepatocyte growth factor receptor (1382 aa).

An N-terminal signal peptide occupies residues 1-24 (MRAPAVLAPGILVLLFTLVQRSCG). The Extracellular segment spans residues 25-933 (ECKEALVKSE…VIVQPDQNFT (909 aa)). Residues 27–516 (KEALVKSEMN…TGKKITKIPL (490 aa)) enclose the Sema domain. N-linked (GlcNAc...) asparagine glycosylation occurs at N45. Disulfide bonds link C95/C101, C98/C160, C133/C141, and C173/C176. N106 carries N-linked (GlcNAc...) asparagine glycosylation. N-linked (GlcNAc...) asparagine glycans are attached at residues N203 and N359. Disulfide bonds link C299/C364 and C386/C398. N-linked (GlcNAc...) asparagine glycans are attached at residues N400 and N406. 4 disulfides stabilise this stretch: C521–C539, C527–C562, C530–C546, and C542–C552. 3 IPT/TIG domains span residues 564–656 (PTIY…FSYV), 658–740 (PIIT…FSYQ), and 743–837 (PIVY…LIYV). T583 is a glycosylation site (O-linked (Man) threonine). N608 and N636 each carry an N-linked (GlcNAc...) asparagine glycan. O-linked (Man) threonine glycans are attached at residues T677 and T762. 3 N-linked (GlcNAc...) asparagine glycosylation sites follow: N786, N880, and N931. Residues 934–956 (GLIVGVISISLIVLLLLGLFLWL) traverse the membrane as a helical segment. Over 957 to 1382 (KRRKQIKDLG…QDIIDGEGDT (426 aa)) the chain is Cytoplasmic. A Phosphoserine modification is found at S967. T978 bears the Phosphothreonine mark. A phosphoserine mark is found at S991, S998, and S1001. The residue at position 1004 (Y1004) is a Phosphotyrosine. In terms of domain architecture, Protein kinase spans 1079-1346 (VHFNEVIGRG…RISAIFSTFI (268 aa)). ATP contacts are provided by residues 1085–1093 (IGRGHFGCV) and K1111. The active-site Proton acceptor is the D1205. The tract at residues 1213 to 1382 (LDEKFTVKVA…QDIIDGEGDT (170 aa)) is interaction with RANBP9. Y1231 carries the phosphotyrosine modification. Phosphotyrosine; by autocatalysis occurs at positions 1235 and 1236. At T1290 the chain carries Phosphothreonine. An interaction with MUC20 region spans residues 1321–1360 (WHPKAELRPSFSELVSRISAIFSTFIGEHYVHVNATYVNV). Y1350 and Y1357 each carry phosphotyrosine; by autocatalysis. At Y1366 the chain carries Phosphotyrosine.

The protein belongs to the protein kinase superfamily. Tyr protein kinase family. In terms of assembly, heterodimer made of an alpha chain (50 kDa) and a beta chain (145 kDa) which are disulfide linked. Binds PLXNB1. Interacts when phosphorylated with downstream effectors including STAT3, PIK3R1, SRC, PCLG1, GRB2 and GAB1. Interacts with SPSB1, SPSB2 and SPSB4. Interacts with INPP5D/SHIP1. When phosphorylated at Tyr-1357, interacts with INPPL1/SHIP2. Interacts with RANBP9 and RANBP10, as well as SPSB1, SPSB2, SPSB3 and SPSB4. SPSB1 binding occurs in the presence and in the absence of HGF, however HGF treatment has a positive effect on this interaction. Interacts with MUC20; prevents interaction with GRB2 and suppresses hepatocyte growth factor-induced cell proliferation. Interacts with GRB10. Interacts with PTPN1 and PTPN2. Interacts with HSP90AA1 and HSP90AB1; the interaction suppresses MET kinase activity. Interacts with tensin TNS3. Interacts (when phosphorylated) with tensin TNS4 (via SH2 domain); the interaction increases MET protein stability by inhibiting MET endocytosis and subsequent lysosomal degradation. In terms of processing, autophosphorylated in response to ligand binding on Tyr-1235 and Tyr-1236 in the kinase domain leading to further phosphorylation of Tyr-1350 and Tyr-1357 in the C-terminal multifunctional docking site. Dephosphorylated by PTPRJ at Tyr-1350 and Tyr-1366. Dephosphorylated by PTPN1 and PTPN2. Ubiquitinated. Ubiquitination by CBL regulates the receptor stability and activity through proteasomal degradation. Post-translationally, O-mannosylation of IPT/TIG domains by TMEM260 is required for protein maturation. O-mannosylated residues are composed of single mannose glycans that are not elongated or modified.

Its subcellular location is the membrane. It carries out the reaction L-tyrosyl-[protein] + ATP = O-phospho-L-tyrosyl-[protein] + ADP + H(+). In its inactive state, the C-terminal tail interacts with the catalytic domain and inhibits the kinase activity. Upon ligand binding, the C-terminal tail is displaced and becomes phosphorylated, thus increasing the kinase activity. Receptor tyrosine kinase that transduces signals from the extracellular matrix into the cytoplasm by binding to hepatocyte growth factor/HGF ligand. Regulates many physiological processes including proliferation, scattering, morphogenesis and survival. Ligand binding at the cell surface induces autophosphorylation of MET on its intracellular domain that provides docking sites for downstream signaling molecules. Following activation by ligand, interacts with the PI3-kinase subunit PIK3R1, PLCG1, SRC, GRB2, STAT3 or the adapter GAB1. Recruitment of these downstream effectors by MET leads to the activation of several signaling cascades including the RAS-ERK, PI3 kinase-AKT, or PLCgamma-PKC. The RAS-ERK activation is associated with the morphogenetic effects while PI3K/AKT coordinates prosurvival effects. During embryonic development, MET signaling plays a role in gastrulation, development and migration of muscles and neuronal precursors, angiogenesis and kidney formation. In adults, participates in wound healing as well as organ regeneration and tissue remodeling. Also promotes differentiation and proliferation of hematopoietic cells. The sequence is that of Hepatocyte growth factor receptor (MET) from Mustela putorius furo (European domestic ferret).